The chain runs to 542 residues: CTP synthase (542 aa).

An amidoligase domain region spans residues M1–L264. S12 serves as a coordination point for CTP. S12 serves as a coordination point for UTP. ATP is bound at residue S13–I18. Y53 provides a ligand contact to L-glutamine. D70 provides a ligand contact to ATP. D70 and E138 together coordinate Mg(2+). CTP is bound by residues D145–E147, K185–Q190, and K221. UTP-binding positions include K185–Q190 and K221. K237–A239 lines the ATP pocket. The Glutamine amidotransferase type-1 domain occupies Y298–K541. G359 lines the L-glutamine pocket. C386 acts as the Nucleophile; for glutamine hydrolysis in catalysis. L-glutamine contacts are provided by residues L387 to Q390, E410, and R467. Active-site residues include H514 and E516.

This sequence belongs to the CTP synthase family. As to quaternary structure, homotetramer.

The enzyme catalyses UTP + L-glutamine + ATP + H2O = CTP + L-glutamate + ADP + phosphate + 2 H(+). The catalysed reaction is L-glutamine + H2O = L-glutamate + NH4(+). It catalyses the reaction UTP + NH4(+) + ATP = CTP + ADP + phosphate + 2 H(+). The protein operates within pyrimidine metabolism; CTP biosynthesis via de novo pathway; CTP from UDP: step 2/2. With respect to regulation, allosterically activated by GTP, when glutamine is the substrate; GTP has no effect on the reaction when ammonia is the substrate. The allosteric effector GTP functions by stabilizing the protein conformation that binds the tetrahedral intermediate(s) formed during glutamine hydrolysis. Inhibited by the product CTP, via allosteric rather than competitive inhibition. Catalyzes the ATP-dependent amination of UTP to CTP with either L-glutamine or ammonia as the source of nitrogen. Regulates intracellular CTP levels through interactions with the four ribonucleotide triphosphates. In Methanococcus aeolicus (strain ATCC BAA-1280 / DSM 17508 / OCM 812 / Nankai-3), this protein is CTP synthase.